A 319-amino-acid polypeptide reads, in one-letter code: Ankyrin repeat domain-containing protein 1 (319 aa).

The interval 46–65 (KTLPANSVKQGEEQRKSEKL) is disordered. The stretch at 53 to 89 (VKQGEEQRKSEKLREAELKKKKLEQRSKLENLEDLEI) forms a coiled coil. Positions 55–65 (QGEEQRKSEKL) are enriched in basic and acidic residues. ANK repeat units follow at residues 152-181 (YKRT…QIEF), 185-214 (LEST…KISA), 218-247 (LLST…DLNA), 251-280 (EGDT…DLKV), and 284-315 (AGKT…KNSR).

In terms of assembly, interacts with TTN/titin and YBX1. As to expression, expressed in heart, cardiac muscle.

It localises to the nucleus. May play an important role in endothelial cell activation. May act as a nuclear transcription factor that negatively regulates the expression of cardiac genes. The sequence is that of Ankyrin repeat domain-containing protein 1 (Ankrd1) from Mus musculus (Mouse).